The sequence spans 213 residues: ATP-dependent Clp protease proteolytic subunit (213 aa).

Ser-114 acts as the Nucleophile in catalysis. The active site involves His-139.

Belongs to the peptidase S14 family. In terms of assembly, fourteen ClpP subunits assemble into 2 heptameric rings which stack back to back to give a disk-like structure with a central cavity, resembling the structure of eukaryotic proteasomes.

It localises to the cytoplasm. The catalysed reaction is Hydrolysis of proteins to small peptides in the presence of ATP and magnesium. alpha-casein is the usual test substrate. In the absence of ATP, only oligopeptides shorter than five residues are hydrolyzed (such as succinyl-Leu-Tyr-|-NHMec, and Leu-Tyr-Leu-|-Tyr-Trp, in which cleavage of the -Tyr-|-Leu- and -Tyr-|-Trp bonds also occurs).. Its function is as follows. Cleaves peptides in various proteins in a process that requires ATP hydrolysis. Has a chymotrypsin-like activity. Plays a major role in the degradation of misfolded proteins. This is ATP-dependent Clp protease proteolytic subunit from Methylobacillus flagellatus (strain ATCC 51484 / DSM 6875 / VKM B-1610 / KT).